Here is a 308-residue protein sequence, read N- to C-terminus: Apolipoprotein E (308 aa).

The signal sequence occupies residues 1–18; the sequence is MKFLWAALVVTLLAGCQA. Repeat copies occupy residues 75-96, 97-118, 119-140, 141-162, 163-184, 185-206, 207-224, and 225-246. The 8 X 22 AA approximate tandem repeats stretch occupies residues 75–246; the sequence is LLIEETMKEV…RLDDVRDQME (172 aa). Residues 153–163 are LDL and other lipoprotein receptors binding; the sequence is HLRKLRKRLLR. 157–160 serves as a coordination point for heparin; the sequence is LRKR. Residues 205-281 form a lipid-binding and lipoprotein association region; the sequence is AIPPSQQLRE…SWFEPLVQDM (77 aa). Residue 220-227 coordinates heparin; sequence GQKVRGRL. The interval 257-308 is homooligomerization; the sequence is SQVRLQAEAFQTRLKSWFEPLVQDMQRQWASLVEKVQSSLGISPSTKPSKTK. The interval 269–281 is specificity for association with VLDL; it reads RLKSWFEPLVQDM.

This sequence belongs to the apolipoprotein A1/A4/E family. Homotetramer. May interact with ABCA1; functionally associated with ABCA1 in the biogenesis of HDLs. May interact with APP/A4 amyloid-beta peptide; the interaction is extremely stable in vitro but its physiological significance is unclear. May interact with MAPT. May interact with MAP2. In the cerebrospinal fluid, interacts with secreted SORL1. Interacts with PMEL; this allows the loading of PMEL luminal fragment on ILVs to induce fibril nucleation. Post-translationally, APOE exists as multiple glycosylated and sialylated glycoforms within cells and in plasma. The extent of glycosylation and sialylation are tissue and context specific. Glycated in plasma VLDL. In terms of processing, phosphorylated by FAM20C in the extracellular medium.

It is found in the secreted. The protein localises to the extracellular space. The protein resides in the extracellular matrix. It localises to the extracellular vesicle. Its subcellular location is the endosome. It is found in the multivesicular body. Functionally, APOE is an apolipoprotein, a protein associating with lipid particles, that mainly functions in lipoprotein-mediated lipid transport between organs via the plasma and interstitial fluids. APOE is a core component of plasma lipoproteins and is involved in their production, conversion and clearance. Apolipoproteins are amphipathic molecules that interact both with lipids of the lipoprotein particle core and the aqueous environment of the plasma. As such, APOE associates with chylomicrons, chylomicron remnants, very low density lipoproteins (VLDL) and intermediate density lipoproteins (IDL) but shows a preferential binding to high-density lipoproteins (HDL). It also binds a wide range of cellular receptors including the LDL receptor/LDLR and the very low-density lipoprotein receptor/VLDLR that mediate the cellular uptake of the APOE-containing lipoprotein particles. Finally, APOE also has a heparin-binding activity and binds heparan-sulfate proteoglycans on the surface of cells, a property that supports the capture and the receptor-mediated uptake of APOE-containing lipoproteins by cells. In Pteropus alecto (Black flying fox), this protein is Apolipoprotein E (APOE).